Consider the following 170-residue polypeptide: Urease accessory protein UreE (170 aa).

The tract at residues 134–170 (ESGAYGGGHHHHGDDGHHPLAPIPLRQKIHRPSDKAE) is disordered.

The protein belongs to the UreE family.

It is found in the cytoplasm. Involved in urease metallocenter assembly. Binds nickel. Probably functions as a nickel donor during metallocenter assembly. In Janthinobacterium sp. (strain Marseille) (Minibacterium massiliensis), this protein is Urease accessory protein UreE.